The following is a 169-amino-acid chain: Small ribosomal subunit protein uS5 (169 aa).

The 64-residue stretch at L14–V77 folds into the S5 DRBM domain.

It belongs to the universal ribosomal protein uS5 family. In terms of assembly, part of the 30S ribosomal subunit. Contacts proteins S4 and S8.

Functionally, with S4 and S12 plays an important role in translational accuracy. Its function is as follows. Located at the back of the 30S subunit body where it stabilizes the conformation of the head with respect to the body. The polypeptide is Small ribosomal subunit protein uS5 (Limosilactobacillus reuteri (strain DSM 20016) (Lactobacillus reuteri)).